Reading from the N-terminus, the 200-residue chain is Protein GrpE (200 aa).

Positions 1 to 10 are enriched in basic and acidic residues; sequence MQEKDSKDVT. A disordered region spans residues 1–57; sequence MQEKDSKDVTMEDEETIASQEEIEVEGNSEESSKEEESNNSEISDENLSEENLKLKD. Positions 11–29 are enriched in acidic residues; it reads MEDEETIASQEEIEVEGNS.

It belongs to the GrpE family. Homodimer.

Its subcellular location is the cytoplasm. In terms of biological role, participates actively in the response to hyperosmotic and heat shock by preventing the aggregation of stress-denatured proteins, in association with DnaK and GrpE. It is the nucleotide exchange factor for DnaK and may function as a thermosensor. Unfolded proteins bind initially to DnaJ; upon interaction with the DnaJ-bound protein, DnaK hydrolyzes its bound ATP, resulting in the formation of a stable complex. GrpE releases ADP from DnaK; ATP binding to DnaK triggers the release of the substrate protein, thus completing the reaction cycle. Several rounds of ATP-dependent interactions between DnaJ, DnaK and GrpE are required for fully efficient folding. The sequence is that of Protein GrpE from Clostridium acetobutylicum (strain ATCC 824 / DSM 792 / JCM 1419 / IAM 19013 / LMG 5710 / NBRC 13948 / NRRL B-527 / VKM B-1787 / 2291 / W).